The following is a 396-amino-acid chain: Tryptophan synthase beta chain 1 (396 aa).

Position 86 is an N6-(pyridoxal phosphate)lysine (Lys86).

The protein belongs to the TrpB family. As to quaternary structure, tetramer of two alpha and two beta chains. It depends on pyridoxal 5'-phosphate as a cofactor.

It carries out the reaction (1S,2R)-1-C-(indol-3-yl)glycerol 3-phosphate + L-serine = D-glyceraldehyde 3-phosphate + L-tryptophan + H2O. It participates in amino-acid biosynthesis; L-tryptophan biosynthesis; L-tryptophan from chorismate: step 5/5. In terms of biological role, the beta subunit is responsible for the synthesis of L-tryptophan from indole and L-serine. The chain is Tryptophan synthase beta chain 1 (trpB1) from Vibrio parahaemolyticus serotype O3:K6 (strain RIMD 2210633).